The sequence spans 30 residues: Glutathione S-transferase (30 aa).

Belongs to the GST superfamily. In terms of assembly, monomer and homodimer.

Its subcellular location is the cytoplasm. It catalyses the reaction RX + glutathione = an S-substituted glutathione + a halide anion + H(+). Functionally, conjugation of reduced glutathione to a wide number of exogenous and endogenous hydrophobic electrophiles. The sequence is that of Glutathione S-transferase from Pseudomonas fluorescens.